Reading from the N-terminus, the 342-residue chain is Succinylglutamate desuccinylase (342 aa).

Zn(2+) is bound by residues His-63, Glu-66, and His-159. Glu-222 is an active-site residue.

Belongs to the AspA/AstE family. Succinylglutamate desuccinylase subfamily. It depends on Zn(2+) as a cofactor.

The enzyme catalyses N-succinyl-L-glutamate + H2O = L-glutamate + succinate. It functions in the pathway amino-acid degradation; L-arginine degradation via AST pathway; L-glutamate and succinate from L-arginine: step 5/5. In terms of biological role, transforms N(2)-succinylglutamate into succinate and glutamate. This Paraburkholderia xenovorans (strain LB400) protein is Succinylglutamate desuccinylase.